The primary structure comprises 591 residues: MALIQTSLIWVAYAVAVAILFLIASTFVYVYQKPRDRAAAVTIVCIFTTLALLATVLLIPVDVALVSSTSRSSLGRKKDWATPDKVDSIVYTLRIVYYTLYSLDAVLCLLVIPFTYFWYEEYDQDAAEHGEQTAAQRIGGALKWTLGFLIFVVAIFLVGFFVPFAKQAKEDKRLDLDYFKHLLSENHGERALSFGLGFLITVGTVLFVLYTGAGMALLPVAMIKSAPSVSAPTLAANTASQLETNRERQRQLEGRNEGREGGLDSRDRRELEALVREERTLIRRERLAAESSGEDRHWIVKAWIKTEAFFRPLKLIGGLILLVFALVIFASMLITGIDKAKNSICGAHCGYILGHINIFQPLNWVLVKSAKVFPIDYVLFLLLVLFLFSASVVGIATAGIRFLWVTIFKIRKGQTSPQALLMATVLLTLITLAINYSVAMVVAPQYATWGPQTYCDMKTNSLDEQPDCAEHKDLIKPCSELATNPAAQQVCTPSVLSTFINRVTINFPFFGIVLFWAQFAFLGVYLIVFLTTLFKAPTLDQEQIDRDLEEEEDEGLLASTGRRFGAAWSDVTGRATKPANYGATERDERIQ.

5 consecutive transmembrane segments (helical) span residues 8 to 28, 39 to 59, 95 to 115, 144 to 164, and 198 to 218; these read LIWVAYAVAVAILFLIASTFV, AAVTIVCIFTTLALLATVLLI, IVYYTLYSLDAVLCLLVIPFT, WTLGFLIFVVAIFLVGFFVPF, and FLITVGTVLFVLYTGAGMALL. The tract at residues 238–266 is disordered; that stretch reads TASQLETNRERQRQLEGRNEGREGGLDSR. The segment covering 244-266 has biased composition (basic and acidic residues); sequence TNRERQRQLEGRNEGREGGLDSR. 4 helical membrane passes run 315-335, 378-398, 422-442, and 509-529; these read LIGGLILLVFALVIFASMLIT, VLFLLLVLFLFSASVVGIATA, MATVLLTLITLAINYSVAMVV, and FFGIVLFWAQFAFLGVYLIVF.

The protein belongs to the LIMR family. LMBRD1 subfamily.

It is found in the lysosome membrane. Its function is as follows. Probable lysosomal cobalamin transporter. Required to export cobalamin from lysosomes allowing its conversion to cofactors. This Pyrenophora tritici-repentis (strain Pt-1C-BFP) (Wheat tan spot fungus) protein is Probable lysosomal cobalamin transporter.